A 488-amino-acid chain; its full sequence is Wax ester synthase/diacylglycerol acyltransferase 8 (488 aa).

Over 1 to 195 the chain is Cytoplasmic; the sequence is MKNEEEEPLS…AIFTIGSTMR (195 aa). His-135 serves as the catalytic Proton acceptor. The helical transmembrane segment at 196–214 threads the bilayer; the sequence is LIWNTLVDMFLLFATMLFL. Over 215–488 the chain is Lumenal; sequence KDTKTPLKGG…RGLLKEAYKV (274 aa). N-linked (GlcNAc...) asparagine glycosylation is found at Asn-238, Asn-252, Asn-353, and Asn-397.

This sequence in the N-terminal section; belongs to the long-chain O-acyltransferase family. As to expression, mostly expressed in flowers and siliques and at low levels in stems.

It is found in the cell membrane. The protein resides in the endoplasmic reticulum membrane. It catalyses the reaction an acyl-CoA + a 1,2-diacyl-sn-glycerol = a triacyl-sn-glycerol + CoA. The catalysed reaction is a long chain fatty alcohol + a fatty acyl-CoA = a wax ester + CoA. It functions in the pathway glycerolipid metabolism; triacylglycerol biosynthesis. Its pathway is lipid metabolism. Its function is as follows. Bifunctional wax ester synthase/diacylglycerol acyltransferase. Involved in cuticular wax biosynthesis. The protein is Wax ester synthase/diacylglycerol acyltransferase 8 of Arabidopsis thaliana (Mouse-ear cress).